We begin with the raw amino-acid sequence, 1332 residues long: Aldehyde oxidase 1 (1332 aa).

The 2Fe-2S ferredoxin-type domain maps to 4 to 91 (STLYFYVNGR…GAAVTTVEGV (88 aa)). The [2Fe-2S] cluster site is built by cysteine 43, cysteine 48, cysteine 51, and cysteine 73. Glutamine 112 serves as a coordination point for Mo-molybdopterin. [2Fe-2S] cluster-binding residues include cysteine 113, cysteine 116, cysteine 148, and cysteine 150. Cysteine 150 is a Mo-molybdopterin binding site. The FAD-binding PCMH-type domain occupies 234–419 (FTGDRVTWIS…LSVTIPYSRK (186 aa)). Residues 262 to 269 (VVMGNTSV), alanine 343, serine 352, histidine 356, aspartate 365, and leucine 409 contribute to the FAD site. Mo-molybdopterin contacts are provided by residues 800–801 (AF), methionine 1041, 1082–1085 (GSVV), glutamine 1197, and leucine 1262. The active-site Proton acceptor; for azaheterocycle hydroxylase activity is glutamate 1264.

The protein belongs to the xanthine dehydrogenase family. In terms of assembly, homodimer. [2Fe-2S] cluster serves as cofactor. Requires FAD as cofactor. The cofactor is Mo-molybdopterin. Expressed in liver.

The protein localises to the cytoplasm. It carries out the reaction an aldehyde + O2 + H2O = a carboxylate + H2O2 + H(+). The enzyme catalyses retinal + O2 + H2O = retinoate + H2O2 + H(+). Its activity is regulated as follows. Inhibited by menadione and isovanillin. Not inhibited by allopurinol, a xanthine dehydrogenase potent inhibitor. Oxidase with broad substrate specificity, oxidizing aromatic azaheterocycles, such as N1-methylnicotinamide, N-methylphthalazinium and phthalazine, as well as aldehydes, such as benzaldehyde, retinal, pyridoxal, and vanillin. Plays a key role in the metabolism of xenobiotics and drugs containing aromatic azaheterocyclic substituents. Participates in the bioactivation of prodrugs such as famciclovir, catalyzing the oxidation step from 6-deoxypenciclovir to penciclovir, which is a potent antiviral agent. Is probably involved in the regulation of reactive oxygen species homeostasis. May be a prominent source of superoxide generation via the one-electron reduction of molecular oxygen. May also catalyze nitric oxide (NO) production via the reduction of nitrite to NO with NADH or aldehyde as electron donor. May play a role in adipogenesis. The sequence is that of Aldehyde oxidase 1 from Cavia porcellus (Guinea pig).